Consider the following 459-residue polypeptide: Alcohol acyl transferase 1 allele GSd (459 aa).

Residues histidine 164 and asparagine 385 each act as proton acceptor in the active site.

This sequence belongs to the plant acyltransferase family. Expressed at very low levels in the cortex and skin of ripe fruit.

Functionally, involved in the biosynthesis of volatile esters which confer ripe apple fruit flavor. Alcohol acyl transferase that can use a wide range of alcohols as substrate to produce esters. This is Alcohol acyl transferase 1 allele GSd from Malus domestica (Apple).